Here is a 427-residue protein sequence, read N- to C-terminus: Histidine--tRNA ligase (427 aa).

It belongs to the class-II aminoacyl-tRNA synthetase family. In terms of assembly, homodimer.

The protein localises to the cytoplasm. It catalyses the reaction tRNA(His) + L-histidine + ATP = L-histidyl-tRNA(His) + AMP + diphosphate + H(+). This is Histidine--tRNA ligase from Streptococcus suis (strain 98HAH33).